A 587-amino-acid polypeptide reads, in one-letter code: MRHLQDQTVLILGLGASGLAMARWWVRHGASVTVADTREAPALLATLRQELPAVKFVSGAFTPDLVQGSAVRAVYRSPGLAPAVIAPVVDAARAMGLPVGGELDLFSRALADLREVSATEVVKDHLVPPESPLSDASDISDASDATDAVDSLEGEAALAADASGDIEEMSASDVVEGAPVSEDAGEDAALPALLAPAPAEQAAGYRPVVLAITGTNGKTTVTSLVGQLVQRAGKTVAVAGNIGPTLLDTLSAHLDADTLPQVWVLELSSFQLADAQDFEPTAAVVLNVTQDHLDWHGDMDAYVAAKARIFGRSTFMLLNRDDPRVMEMLPTPVKVRLRPPQVRPHSTFGAGEPQRPGDYGIETVNGMAWLVRAAQADETIKRRKGEEVELHIQRLMPLDALRIRGRHNATNALAALGLAVAAGCSLAPMLHGLREYRGEPHRVESIAVVNDVEYFDDSKGTNVGATAAALAGLGAERKLVVILGGEGKGQDFSPLAEPVSHHARAVVLIGKDAPLIRSALQASQVALLDAASMQEAVSLAAAQAHTGDAVLMSPACASFDMFDNYEHRAQVFCDAVQALAQEQGVVL.

Residues 124 to 147 (DHLVPPESPLSDASDISDASDATD) are disordered. Positions 132–147 (PLSDASDISDASDATD) are enriched in low complexity. An ATP-binding site is contributed by 214-220 (GTNGKTT).

Belongs to the MurCDEF family.

Its subcellular location is the cytoplasm. It carries out the reaction UDP-N-acetyl-alpha-D-muramoyl-L-alanine + D-glutamate + ATP = UDP-N-acetyl-alpha-D-muramoyl-L-alanyl-D-glutamate + ADP + phosphate + H(+). Its pathway is cell wall biogenesis; peptidoglycan biosynthesis. Functionally, cell wall formation. Catalyzes the addition of glutamate to the nucleotide precursor UDP-N-acetylmuramoyl-L-alanine (UMA). The protein is UDP-N-acetylmuramoylalanine--D-glutamate ligase of Polaromonas sp. (strain JS666 / ATCC BAA-500).